A 248-amino-acid chain; its full sequence is Ras-related protein Rab-28 (248 aa).

The tract at residues Met-1–Asp-30 is disordered. Gly-42–Ser-50 contacts GTP. The Effector region motif lies at Tyr-64–Phe-72. GTP is bound by residues Asp-91 to Gln-95, Asn-152 to Asp-155, and Ser-182 to Lys-184. The tract at residues Gln-227–Thr-248 is disordered. Polar residues predominate over residues Ser-239–Thr-248.

It belongs to the small GTPase superfamily. Rab family. As to expression, expressed in amphid and phasmid ciliated sensory neurons.

It is found in the cell projection. Its subcellular location is the cilium membrane. The protein localises to the perikaryon. The protein resides in the cytoplasm. It localises to the cytoskeleton. It is found in the cilium axoneme. Its function is as follows. GTPase. Intraflagellar transport (IFT) cargo that undergoes bidirectional IFT along the ciliary axoneme when in active GTP-bound state in amphid and phasmid ciliated sensory neurons. Targeting and function as IFT cargo may depend on the BBSome, an IFT cargo adapter. Does not undergo IFT when in inactive GDP-bound state. May in turn play a role in cilium structure and/or function in ciliated sensory neurons. This is Ras-related protein Rab-28 from Caenorhabditis elegans.